Consider the following 520-residue polypeptide: Cytochrome P450 monooxygenase vrtE (520 aa).

A helical transmembrane segment spans residues 16 to 36 (ALSLLHYVLGAIFLLLLFHML). Asn-137 is a glycosylation site (N-linked (GlcNAc...) asparagine). Residue Cys-459 participates in heme binding.

It belongs to the cytochrome P450 family. The cofactor is heme.

The protein localises to the membrane. It functions in the pathway secondary metabolite biosynthesis; terpenoid biosynthesis. In terms of biological role, cytochrome P450 monooxygenase; part of the gene cluster that mediates the biosynthesis of viridicatumtoxin, a tetracycline-like fungal meroterpenoid with a unique, fused spirobicyclic ring system. The first step of the pathway is the production of the malonamoyl-CoA starter unit for the polyketide synthase vrtA. The aldolase vrtJ may be involved in the synthesis of the malonamate substrate for malonamoyl-CoA synthetase vrtB. The polyketide synthase vrtA then may utilize the malonamoyl-CoA starter unit, followed by sequential condensation of eight malonyl-CoA units to form the polyketide backbone. The cyclization of the last ring could be mediated by the lactamase-like protein vrtG. The proposed post-PKS tailoring steps are a hydroxylation at C5 catalyzed the cytochrome P450 monooxygenase vrtE, a hydroxylation at C12a catalyzed by VrtH and/or VrtI, and an O-methylation by the O-methyltransferase vrtF. VrtC is then proposed to catalyze the transfer of a geranyl group synthesized by vrtD to the aromatic C ring of the tetracyclic polyketide intermediate of viridicatumtoxin to yield previridicatumtoxin. Finally, the cytochrome P450 monooxygenase vrtK catalyzes the spirocyclization of the geranyl moiety of previridicatumtoxin to afford viridicatumtoxin. The chain is Cytochrome P450 monooxygenase vrtE from Penicillium aethiopicum.